Here is a 553-residue protein sequence, read N- to C-terminus: Transcription factor GAMYB (553 aa).

The span at methionine 1–glutamine 17 shows a compositional bias: basic and acidic residues. The disordered stretch occupies residues methionine 1–tryptophan 45. The segment covering serine 27 to proline 38 has biased composition (gly residues). HTH myb-type domains follow at residues glycine 37–leucine 89 and arginine 90–glutamine 144. DNA-binding regions (H-T-H motif) lie at residues tryptophan 65–leucine 89 and tryptophan 117–isoleucine 140. The interval proline 464–proline 488 is disordered.

The protein resides in the nucleus. In terms of biological role, transcriptional activator of gibberellin-dependent alpha-amylase expression in aleurone cells. Involved in pollen and floral organs development. May bind to the 5'-TAACAAA-3' box of alpha-amylase promoter. The sequence is that of Transcription factor GAMYB (GAM1) from Oryza sativa subsp. indica (Rice).